Consider the following 96-residue polypeptide: Small ubiquitin-related modifier 2 (96 aa).

Residue Lys-11 forms a Glycyl lysine isopeptide (Lys-Gly) (interchain with G-Cter in SUMO) linkage. The 81-residue stretch at 16-96 (DHINLKVAGQ…FQQQTGGHRI (81 aa)) folds into the Ubiquitin-like domain. Gly-93 participates in a covalent cross-link: Glycyl lysine isopeptide (Gly-Lys) (interchain with K-? in acceptor proteins). The propeptide occupies 94-96 (HRI).

The protein belongs to the ubiquitin family. SUMO subfamily. As to quaternary structure, interacts with sae2 and ube2i. Covalently attached to a number of proteins. Polymeric chains can be formed through Lys-11 cross-linking. In terms of processing, cleavage of precursor form by a sentrin-specific protease is necessary for function.

It is found in the nucleus. Functionally, ubiquitin-like protein that can be covalently attached to proteins as a monomer or as a lysine-linked polymer. Covalent attachment via an isopeptide bond to its substrates requires prior activation by the E1 complex sae1-sae2 and linkage to the E2 enzyme ube2i, and can be promoted by an E3 ligase such as pias1-4. This post-translational modification on lysine residues of proteins plays a crucial role in a number of cellular processes such as nuclear transport, DNA replication and repair, mitosis and signal transduction. Polymeric sumo2 chains are also susceptible to polyubiquitination which functions as a signal for proteasomal degradation of modified proteins. The sequence is that of Small ubiquitin-related modifier 2 from Danio rerio (Zebrafish).